Reading from the N-terminus, the 119-residue chain is DNA-binding protein TubR (119 aa).

Homodimer. Binds to TubZ filaments via the C-terminus of TubZ. DNA is not required for binding to TubZ.

In terms of biological role, a DNA-binding protein that is part of the type III plasmid partition system used to ensure correct segregation of the pBc10987 plasmid. Binds TubZ filaments but does not influence the GTPase activity of TubZ with or without DNA. Cooperatively binds to multiple regions in tubC (centromere-like site) upstream of its own gene with consensus sequence N(T/A)ATTNC(C/G)GNAAT(A/T)N; probably forms an extended DNA-protein filament. Binds sites in its own promoter region and presumably represses its expression; its effect on RNA expression has not been shown. Does not specifically bind to the putative origin of replication on pBc10987. This Bacillus cereus (strain ATCC 10987 / NRS 248) protein is DNA-binding protein TubR.